Here is a 285-residue protein sequence, read N- to C-terminus: MARCO-like protein (285 aa).

Residues 1-20 (MRAFIFFLFMLLAMFSASST) form the signal peptide. Asparagine 24 is a glycosylation site (N-linked (GlcNAc...) asparagine). 2 disordered regions span residues 47–77 (NHLG…GQPG) and 91–285 (GRAG…QGNL). Polar residues-rich tracts occupy residues 57-67 (KQGGSYTQGNP) and 105-114 (SGKSNQKGNP). Residues 115–128 (ESSNKQENSGSSSQ) are compositionally biased toward low complexity. A compositionally biased stretch (polar residues) spans 134-145 (ISTQQGNPGSSD). Residues 160 to 173 (GSSSQQGKPGSSSQ) show a composition bias toward low complexity. Positions 174 to 185 (HGNLGSSTQKGN) are enriched in polar residues. Positions 186-220 (LGSSSLQGHLGLSSHQGKPESSGQQGKPGSSSQQG) are enriched in low complexity. Residues 221 to 285 (NLGTSGQQEK…PGSSSRQGNL (65 aa)) show a composition bias toward polar residues.

The protein is MARCO-like protein of Homo sapiens (Human).